The following is a 417-amino-acid chain: NADH-quinone oxidoreductase subunit D (417 aa).

The protein belongs to the complex I 49 kDa subunit family. NDH-1 is composed of 14 different subunits. Subunits NuoB, C, D, E, F, and G constitute the peripheral sector of the complex.

The protein resides in the cell inner membrane. It catalyses the reaction a quinone + NADH + 5 H(+)(in) = a quinol + NAD(+) + 4 H(+)(out). In terms of biological role, NDH-1 shuttles electrons from NADH, via FMN and iron-sulfur (Fe-S) centers, to quinones in the respiratory chain. The immediate electron acceptor for the enzyme in this species is believed to be ubiquinone. Couples the redox reaction to proton translocation (for every two electrons transferred, four hydrogen ions are translocated across the cytoplasmic membrane), and thus conserves the redox energy in a proton gradient. The protein is NADH-quinone oxidoreductase subunit D of Francisella tularensis subsp. holarctica (strain FTNF002-00 / FTA).